Reading from the N-terminus, the 293-residue chain is tRNA pseudouridine synthase B (293 aa).

Residue aspartate 39 is the Nucleophile of the active site.

The protein belongs to the pseudouridine synthase TruB family. Type 1 subfamily.

It catalyses the reaction uridine(55) in tRNA = pseudouridine(55) in tRNA. Responsible for synthesis of pseudouridine from uracil-55 in the psi GC loop of transfer RNAs. This Thermobifida fusca (strain YX) protein is tRNA pseudouridine synthase B.